Here is a 492-residue protein sequence, read N- to C-terminus: Non-structural protein 1 (492 aa).

The segment at 1 to 81 (MATFKDACFH…CFLDNEPHLL (81 aa)) is RNA-binding. Positions 42 to 79 (CVECCQLTELTFCHGCSLAHVCQWCIQNKRCFLDNEPH) are zinc-binding domain. The interval 82–176 (KLRTFESPIT…CVNLPYKLVN (95 aa)) is important for cytoskeleton localization. Residues 318–492 (TISQCKWCNV…LLISDSEDDD (175 aa)) form an interaction with host IRF3 region. The pLxIS motif signature appears at 483–486 (LLIS).

This sequence belongs to the rotavirus NSP1 family. Interacts (via C-terminus) with host IRF3; this interaction leads to IRF3 degradation. Interacts with host IRF7; this interaction leads to IRF7 degradation. Interacts with host CUL1 and CUL3.

It is found in the host cytoplasm. It localises to the host cytoskeleton. Plays a role in the inhibition of host innate immunity by inducing the degradation of key host factors required to activate interferon production such as IRF3, IRF5 or IRF7. Associates with components of cullin RING ligases (CRLs) including CUL1 or CUL3, which are essential multisubunit ubiquitination complexes, to modulate their activities. The chain is Non-structural protein 1 from Oryctolagus cuniculus (Rabbit).